A 276-amino-acid polypeptide reads, in one-letter code: NAD-capped RNA hydrolase NudC (276 aa).

Arg-82 is a substrate binding site. Residues Cys-112 and Cys-115 each coordinate Zn(2+). A substrate-binding site is contributed by Glu-125. Residues Cys-130 and Cys-133 each contribute to the Zn(2+) site. Tyr-138 serves as a coordination point for substrate. Residues 139-262 (PRISPSMIVL…SIARYLIDLY (124 aa)) enclose the Nudix hydrolase domain. A divalent metal cation-binding residues include Ala-172, Glu-188, and Glu-192. The Nudix box signature appears at 173 to 194 (GFAEPGESAEDCLVREVREEVA). 206 to 213 (QCWPFPHS) is a binding site for substrate. An a divalent metal cation-binding site is contributed by Glu-233. Ala-255 contributes to the substrate binding site.

The protein belongs to the Nudix hydrolase family. NudC subfamily. As to quaternary structure, homodimer. Mg(2+) is required as a cofactor. Mn(2+) serves as cofactor. It depends on Zn(2+) as a cofactor.

The catalysed reaction is a 5'-end NAD(+)-phospho-ribonucleoside in mRNA + H2O = a 5'-end phospho-adenosine-phospho-ribonucleoside in mRNA + beta-nicotinamide D-ribonucleotide + 2 H(+). The enzyme catalyses NAD(+) + H2O = beta-nicotinamide D-ribonucleotide + AMP + 2 H(+). It carries out the reaction NADH + H2O = reduced beta-nicotinamide D-ribonucleotide + AMP + 2 H(+). Functionally, mRNA decapping enzyme that specifically removes the nicotinamide adenine dinucleotide (NAD) cap from a subset of mRNAs by hydrolyzing the diphosphate linkage to produce nicotinamide mononucleotide (NMN) and 5' monophosphate mRNA. The NAD-cap is present at the 5'-end of some mRNAs and stabilizes RNA against 5'-processing. Has preference for mRNAs with a 5'-end purine. Catalyzes the hydrolysis of a broad range of dinucleotide pyrophosphates. The chain is NAD-capped RNA hydrolase NudC from Pseudomonas putida (strain ATCC 47054 / DSM 6125 / CFBP 8728 / NCIMB 11950 / KT2440).